The chain runs to 205 residues: Holliday junction branch migration complex subunit RuvA (205 aa).

The interval 1-67 (MITSIFGKVT…QIIEEAFAFN (67 aa)) is domain I. The segment at 68-146 (TLEEKEWFCR…NNKNIKGVQV (79 aa)) is domain II. A flexible linker region spans residues 147 to 150 (ADGY). The tract at residues 150-205 (YDELFETLKSLGYKQQEIQDALKMIEVKPDFDISQLVAEVIKLMSFKNNEITNKTA) is domain III.

The protein belongs to the RuvA family. In terms of assembly, homotetramer. Forms an RuvA(8)-RuvB(12)-Holliday junction (HJ) complex. HJ DNA is sandwiched between 2 RuvA tetramers; dsDNA enters through RuvA and exits via RuvB. An RuvB hexamer assembles on each DNA strand where it exits the tetramer. Each RuvB hexamer is contacted by two RuvA subunits (via domain III) on 2 adjacent RuvB subunits; this complex drives branch migration. In the full resolvosome a probable DNA-RuvA(4)-RuvB(12)-RuvC(2) complex forms which resolves the HJ.

Its subcellular location is the cytoplasm. Functionally, the RuvA-RuvB-RuvC complex processes Holliday junction (HJ) DNA during genetic recombination and DNA repair, while the RuvA-RuvB complex plays an important role in the rescue of blocked DNA replication forks via replication fork reversal (RFR). RuvA specifically binds to HJ cruciform DNA, conferring on it an open structure. The RuvB hexamer acts as an ATP-dependent pump, pulling dsDNA into and through the RuvAB complex. HJ branch migration allows RuvC to scan DNA until it finds its consensus sequence, where it cleaves and resolves the cruciform DNA. This Mycoplasma genitalium (strain ATCC 33530 / DSM 19775 / NCTC 10195 / G37) (Mycoplasmoides genitalium) protein is Holliday junction branch migration complex subunit RuvA.